Reading from the N-terminus, the 122-residue chain is Cytochrome c-556 (122 aa).

Heme-binding residues include Met-11, Cys-111, Cys-114, and His-115. Heme c contacts are provided by Met-11, Cys-111, Cys-114, and His-115.

In terms of assembly, monomer. Binds 1 heme c group covalently per subunit.

Functionally, low-spin monoheme cytochrome c. The chain is Cytochrome c-556 from Agrobacterium tumefaciens (strain II Chrys).